Here is a 153-residue protein sequence, read N- to C-terminus: Transcriptional repressor NrdR (153 aa).

A zinc finger lies at 3-34; that stretch reads CPYCGYEDSKVIDTRPADEGRTIKRRRECLKC. In terms of domain architecture, ATP-cone spans 49–139; the sequence is ILVIKKDNRR…VYRQFKDINT (91 aa).

The protein belongs to the NrdR family. Zn(2+) serves as cofactor.

Functionally, negatively regulates transcription of bacterial ribonucleotide reductase nrd genes and operons by binding to NrdR-boxes. The chain is Transcriptional repressor NrdR from Caldicellulosiruptor saccharolyticus (strain ATCC 43494 / DSM 8903 / Tp8T 6331).